The primary structure comprises 180 residues: MKITISGPPGSGTTTVAKIVAEKLGLKLISAGDVFRQLAAKKGMTVEEFSQYAEENPEIDRLIDQTQKEMAEKEKNVVVEGRLSGWFVKNADLKVWIFADPEVRYSRIAKREGKDLTVVRQETRLREEFEKRRYWKFYSIDIDNWTIYDLIINSGSFDAEGVVEIILKAVEVKKIKVDQK.

7-15 serves as a coordination point for ATP; sequence GPPGSGTTT.

The protein belongs to the cytidylate kinase family. Type 2 subfamily.

It localises to the cytoplasm. It catalyses the reaction CMP + ATP = CDP + ADP. It carries out the reaction dCMP + ATP = dCDP + ADP. The protein is Cytidylate kinase (cmk) of Archaeoglobus fulgidus (strain ATCC 49558 / DSM 4304 / JCM 9628 / NBRC 100126 / VC-16).